The following is a 941-amino-acid chain: MDNKLNHNDDNTLIQTEDVIGIDLGTRFSCVSIWRNKRFEIIPDQFGNRTIPSVVSFYKSAKLVGHNALCMKDANPKNTIYDIKRIIGRRMNDKSIEQTKNLISYELVSDESKHENILVQLDKSDYTLTHKYQYKPEEICAQILIEIRRIASQYLQKPINKAVITVPAYFNDAQRQATLDSAKIAGLDVLKIINEPTAAALAYGLGSEKWNKKTGGNVIVYDLGAGTLDVSLMNISNGVFRTLAVGGNTHLGGEDFDYLIMNHILIDFRKKHRIKELQMSKLSQLKLKNSVENAKKLLSTVDKAVVCVDDFYNGKQLYFNLTREFMEMVCNELFIMCMKPLKDVLDSSGLTRQDIDKVILVGGSTRIPKIQKLILDFFKNTQINALTMSLNPDEVVSAGASIYGYIITNKGDPFSDNLVLLDITPLSLGVETLQKQMTVIIPRNTVIPTKKTKIFSTDTDDQDNVNIKIFEGERKLTKNNFHVGTFNLSGFEKGPRGYPVIKITFHIDINGILQVTAHEKKSDIQNGIKITSTWGAKGRLSKSDIETIIKEAEQNEEIDKLYSHKIGLVHRINSVCNAITINLKDNEITLTNADKKKIKADIKSNLKWLQNKDINDLEVTELEKRENRLNKLYAPLIIQIGKKSDFKDYNKDTTTAEIHGDDNENDGGIYERIVLESDPSDYEKEEIKALTATIQDLCKNIINVVNNPISKFSREDIDLVTDYMETIQIWTYTTTATSTIEFIAKINEINKFTEDIMKKYEDTKIFEKNDSFTYKDELQLTCLTLNECIKSNYFSVKKSEIDILSKTIKDTMFWLLGHQNEDNSVYKEKLDQVISICNSVYHGMHRIKELENQPDIPEDSEDSESEDDTTTSKDSESSEITENLALPTNKIRENTSELLKRLPDKIKSSTQNKNDVLLKIDLNKLNPNTDIKYKNIDNHYR.

Residues 851–887 are disordered; the sequence is ENQPDIPEDSEDSESEDDTTTSKDSESSEITENLALP. Residues 856–869 show a composition bias toward acidic residues; the sequence is IPEDSEDSESEDDT.

It belongs to the heat shock protein 70 family.

Its function is as follows. Probable chaperone. The polypeptide is Heat shock protein 70 homolog (Acanthamoeba polyphaga (Amoeba)).